A 383-amino-acid chain; its full sequence is Dual-specificity RNA methyltransferase RlmN (383 aa).

The active-site Proton acceptor is glutamate 95. The region spanning 101–349 (EETRGTLCVS…TTVRKTRGDD (249 aa)) is the Radical SAM core domain. A disulfide bridge connects residues cysteine 108 and cysteine 354. Cysteine 115, cysteine 119, and cysteine 122 together coordinate [4Fe-4S] cluster. S-adenosyl-L-methionine is bound by residues 180 to 181 (GE), serine 212, 234 to 236 (SLH), and asparagine 311. Cysteine 354 functions as the S-methylcysteine intermediate in the catalytic mechanism.

The protein belongs to the radical SAM superfamily. RlmN family. [4Fe-4S] cluster is required as a cofactor.

The protein localises to the cytoplasm. The catalysed reaction is adenosine(2503) in 23S rRNA + 2 reduced [2Fe-2S]-[ferredoxin] + 2 S-adenosyl-L-methionine = 2-methyladenosine(2503) in 23S rRNA + 5'-deoxyadenosine + L-methionine + 2 oxidized [2Fe-2S]-[ferredoxin] + S-adenosyl-L-homocysteine. The enzyme catalyses adenosine(37) in tRNA + 2 reduced [2Fe-2S]-[ferredoxin] + 2 S-adenosyl-L-methionine = 2-methyladenosine(37) in tRNA + 5'-deoxyadenosine + L-methionine + 2 oxidized [2Fe-2S]-[ferredoxin] + S-adenosyl-L-homocysteine. Its function is as follows. Specifically methylates position 2 of adenine 2503 in 23S rRNA and position 2 of adenine 37 in tRNAs. m2A2503 modification seems to play a crucial role in the proofreading step occurring at the peptidyl transferase center and thus would serve to optimize ribosomal fidelity. The chain is Dual-specificity RNA methyltransferase RlmN from Paraburkholderia xenovorans (strain LB400).